The primary structure comprises 341 residues: MEPAFGEVNQLGGVFVNGRPLPNAIRLRIVELAQLGIRPCDISRQLRVSHGCVSKILARYNETGSILPGAIGGSKPRVTTPTVVKHIRTYKQRDPGIFAWEIRDRLLADGVCDKYNVPSVSSISRILRNKIGNLAQQGHYDSYKQHQPAPQPALPYNHIYSYPSPITAAAAKVPTPPGVPAIPGSVAMPRTWPSSHSVTDILGIRSITDQVSDSSPYHSPKVEEWSSLGRSNFPAAAPHAVNGLEKGALEQETKYGQAPNGLPAVGSFVSASSMAPYPTPAQVSPYMTYSAAPSGYVAGHGWQHAGSTPLSPHNCDIPASLAFKGMQAAREGSHSVTASAL.

The paired DNA-binding region spans 4-130 (AFGEVNQLGG…SSISRILRNK (127 aa)). Residues 7-63 (EVNQLGGVFVNGRPLPNAIRLRIVELAQLGIRPCDISRQLRVSHGCVSKILARYNET) form a PAI subdomain region. The RED subdomain stretch occupies residues 82 to 130 (TVVKHIRTYKQRDPGIFAWEIRDRLLADGVCDKYNVPSVSSISRILRNK). The interval 168–189 (AAAAKVPTPPGVPAIPGSVAMP) is interaction with KDM5B.

As to quaternary structure, interacts with KDM5B.

Its subcellular location is the nucleus. Its function is as follows. Transcription factor required for normal development of thymus, parathyroid glands, ultimobranchial bodies, teeth, skeletal elements of skull and larynx as well as distal limbs. This chain is Paired box protein Pax-9 (PAX9), found in Saimiri boliviensis boliviensis (Bolivian squirrel monkey).